The following is a 221-amino-acid chain: Epididymal secretory glutathione peroxidase (221 aa).

The first 21 residues, 1 to 21, serve as a signal peptide directing secretion; it reads MTAWLGASYVLPILLVSFVQT. Cys-73 is a catalytic residue.

The protein belongs to the glutathione peroxidase family. As to expression, epididymis.

The protein resides in the secreted. It carries out the reaction 2 glutathione + H2O2 = glutathione disulfide + 2 H2O. Functionally, protects cells and enzymes from oxidative damage, by catalyzing the reduction of hydrogen peroxide, lipid peroxides and organic hydroperoxide, by glutathione. May constitute a glutathione peroxidase-like protective system against peroxide damage in sperm membrane lipids. In Canis lupus familiaris (Dog), this protein is Epididymal secretory glutathione peroxidase (GPX5).